The following is a 481-amino-acid chain: WD repeat-containing protein 55 homolog (481 aa).

Residues 1–116 (MHTHNHFKTP…NRDVETNFDL (116 aa)) form a disordered region. 3 stretches are compositionally biased toward acidic residues: residues 12–23 (DAEEVDDLDDEM), 31–46 (IEQEVLFESDSDDDGF), and 68–81 (DSFDPNAEDSDSDD). WD repeat units lie at residues 144–183 (KLEDFVTDISFHPERNIIALATIIGDVHLYEYANEGNKLI), 188–227 (VHSKACRDVEFTEDGRNLLTCSKDKCVMVTDMETEKLKKL), 231–269 (AHDDAINTLHVLNENLFATGDDAGTVKLWDLRTKQHVFE), 272–311 (QIDDQVTQLLSNEQNTLLLATSADGYLTTFNIPGRKLYVQ), 314–353 (PYEEELNCMGIYRGDSKLVVGTSKGKLYSYNWGSFGYHCD), and 398–437 (QHNMPIEALDVNSTGELLASSSHNNDVRFWNVKYFEDFGD).

It belongs to the WD repeat WDR55 family.

This Drosophila ananassae (Fruit fly) protein is WD repeat-containing protein 55 homolog.